We begin with the raw amino-acid sequence, 412 residues long: Short-chain specific acyl-CoA dehydrogenase, mitochondrial (412 aa).

A mitochondrion-targeting transit peptide spans 1–24 (MAATLLARACGLVRGAPWPWGWRR). The residue at position 27 (Thr-27) is a Phosphothreonine. An N6-acetyllysine; alternate modification is found at Lys-51. At Lys-51 the chain carries N6-succinyllysine; alternate. Lys-72 bears the N6-acetyllysine mark. At Lys-129 the chain carries N6-acetyllysine; alternate. The residue at position 129 (Lys-129) is an N6-succinyllysine; alternate. FAD contacts are provided by residues 152–161 (FALSEPGNGS) and 185–187 (WIT). Residue Ser-161 coordinates substrate. Lys-208 is subject to N6-acetyllysine. Lys-262 bears the N6-acetyllysine; alternate mark. Lys-262 is modified (N6-succinyllysine; alternate). A substrate-binding site is contributed by 269–272 (DTGR). Arg-297 lines the FAD pocket. Lys-306 bears the N6-acetyllysine; alternate mark. Lys-306 carries the post-translational modification N6-succinyllysine; alternate. Residues Gln-308 and 365 to 369 (QILGG) contribute to the FAD site. The active-site Proton acceptor is the Glu-392. Position 393 (Gly-393) interacts with substrate. Residue 394–396 (TSE) coordinates FAD.

The protein belongs to the acyl-CoA dehydrogenase family. Homotetramer. The cofactor is FAD.

It is found in the mitochondrion matrix. It catalyses the reaction a short-chain 2,3-saturated fatty acyl-CoA + oxidized [electron-transfer flavoprotein] + H(+) = a short-chain (2E)-enoyl-CoA + reduced [electron-transfer flavoprotein]. The catalysed reaction is butanoyl-CoA + oxidized [electron-transfer flavoprotein] + H(+) = (2E)-butenoyl-CoA + reduced [electron-transfer flavoprotein]. The enzyme catalyses pentanoyl-CoA + oxidized [electron-transfer flavoprotein] + H(+) = (2E)-pentenoyl-CoA + reduced [electron-transfer flavoprotein]. It carries out the reaction hexanoyl-CoA + oxidized [electron-transfer flavoprotein] + H(+) = (2E)-hexenoyl-CoA + reduced [electron-transfer flavoprotein]. The protein operates within lipid metabolism; mitochondrial fatty acid beta-oxidation. Short-chain specific acyl-CoA dehydrogenase is one of the acyl-CoA dehydrogenases that catalyze the first step of mitochondrial fatty acid beta-oxidation, an aerobic process breaking down fatty acids into acetyl-CoA and allowing the production of energy from fats. The first step of fatty acid beta-oxidation consists in the removal of one hydrogen from C-2 and C-3 of the straight-chain fatty acyl-CoA thioester, resulting in the formation of trans-2-enoyl-CoA. Among the different mitochondrial acyl-CoA dehydrogenases, short-chain specific acyl-CoA dehydrogenase acts specifically on acyl-CoAs with saturated 4 to 6 carbons long primary chains. This Bos taurus (Bovine) protein is Short-chain specific acyl-CoA dehydrogenase, mitochondrial (ACADS).